The chain runs to 55 residues: Large ribosomal subunit protein bL33 (55 aa).

Over residues 1–11 (MAKGGREKIKL) the composition is skewed to basic and acidic residues. The tract at residues 1-29 (MAKGGREKIKLESTAGTGHFYTTTKNKKT) is disordered. The segment covering 14–24 (TAGTGHFYTTT) has biased composition (polar residues).

It belongs to the bacterial ribosomal protein bL33 family.

This is Large ribosomal subunit protein bL33 from Thiobacillus denitrificans (strain ATCC 25259 / T1).